A 274-amino-acid chain; its full sequence is tRNA uridine(34) hydroxylase (274 aa).

A Rhodanese domain is found at 121–217 (SRSDVYTIDT…YFKSTKNTNN (97 aa)). C177 acts as the Cysteine persulfide intermediate in catalysis.

The protein belongs to the TrhO family.

The enzyme catalyses uridine(34) in tRNA + AH2 + O2 = 5-hydroxyuridine(34) in tRNA + A + H2O. Catalyzes oxygen-dependent 5-hydroxyuridine (ho5U) modification at position 34 in tRNAs. This is tRNA uridine(34) hydroxylase from Ehrlichia canis (strain Jake).